The following is a 116-amino-acid chain: Large ribosomal subunit protein uL22 (116 aa).

It belongs to the universal ribosomal protein uL22 family. Part of the 50S ribosomal subunit.

Functionally, this protein binds specifically to 23S rRNA; its binding is stimulated by other ribosomal proteins, e.g. L4, L17, and L20. It is important during the early stages of 50S assembly. It makes multiple contacts with different domains of the 23S rRNA in the assembled 50S subunit and ribosome. In terms of biological role, the globular domain of the protein is located near the polypeptide exit tunnel on the outside of the subunit, while an extended beta-hairpin is found that lines the wall of the exit tunnel in the center of the 70S ribosome. In Orientia tsutsugamushi (strain Boryong) (Rickettsia tsutsugamushi), this protein is Large ribosomal subunit protein uL22.